Consider the following 131-residue polypeptide: Synaptobrevin-like protein (131 aa).

The Cytoplasmic portion of the chain corresponds to 1-81 (MLHITTMTDK…KRKFWWKNCK (81 aa)). A v-SNARE coiled-coil homology domain is found at 18-78 (RLQQTQAQVN…GKLKRKFWWK (61 aa)). Residues 82 to 102 (MLAVLGVLVVILIIVLIVWVV) form a helical; Anchor for type IV membrane protein membrane-spanning segment. Residues 103–131 (SEQKNKVEQSEHSSHHLVMDNSSHLLSEQ) lie on the Vesicular side of the membrane. Residues 112 to 131 (SEHSSHHLVMDNSSHLLSEQ) form a disordered region. Polar residues predominate over residues 122–131 (DNSSHLLSEQ).

It belongs to the synaptobrevin family.

The protein resides in the cytoplasmic vesicle. The protein localises to the secretory vesicle. It is found in the synaptic vesicle membrane. It localises to the synapse. Its subcellular location is the synaptosome. In terms of biological role, unknown, but synaptobrevins are presumed to be involved in targeting and fusion of synaptic vesicles with the presynaptic membrane as well as in neurotransmitter release. This is Synaptobrevin-like protein from Schistosoma mansoni (Blood fluke).